Consider the following 119-residue polypeptide: Holo-[acyl-carrier-protein] synthase (119 aa).

Mg(2+) contacts are provided by Asp8 and Glu50.

Belongs to the P-Pant transferase superfamily. AcpS family. It depends on Mg(2+) as a cofactor.

Its subcellular location is the cytoplasm. It catalyses the reaction apo-[ACP] + CoA = holo-[ACP] + adenosine 3',5'-bisphosphate + H(+). Its function is as follows. Transfers the 4'-phosphopantetheine moiety from coenzyme A to a Ser of acyl-carrier-protein. This Clavibacter sepedonicus (Clavibacter michiganensis subsp. sepedonicus) protein is Holo-[acyl-carrier-protein] synthase.